The sequence spans 291 residues: Elongation factor Ts (291 aa).

The interval 78 to 81 is involved in Mg(2+) ion dislocation from EF-Tu; sequence TDFV.

The protein belongs to the EF-Ts family.

It localises to the cytoplasm. Associates with the EF-Tu.GDP complex and induces the exchange of GDP to GTP. It remains bound to the aminoacyl-tRNA.EF-Tu.GTP complex up to the GTP hydrolysis stage on the ribosome. This is Elongation factor Ts from Ureaplasma urealyticum serovar 10 (strain ATCC 33699 / Western).